Here is a 134-residue protein sequence, read N- to C-terminus: Small ribosomal subunit protein bS6 (134 aa).

Positions 99–134 are disordered; that stretch reads EPSAMMQKRDRDERKDRERGRRRDEDGFSGDRNEEN. Residues 105–134 show a composition bias toward basic and acidic residues; that stretch reads QKRDRDERKDRERGRRRDEDGFSGDRNEEN.

The protein belongs to the bacterial ribosomal protein bS6 family.

Its function is as follows. Binds together with bS18 to 16S ribosomal RNA. This Methylobacterium nodulans (strain LMG 21967 / CNCM I-2342 / ORS 2060) protein is Small ribosomal subunit protein bS6.